A 684-amino-acid chain; its full sequence is Divalent metal cation transporter MntH (684 aa).

The disordered stretch occupies residues 223-250; sequence PTAINAPSGTPAAGRTSPTPTTDSQRRS. Helical transmembrane passes span 283-303, 318-340, 365-387, 391-413, 427-446, 467-489, 514-534, 555-577, 597-616, 621-643, and 656-678; these read TSLKTSWYLLGPAFVAAIAYV, FGYLLLWVIVAANVMAALVQYLS, LAYWAQAEIVAMATDVAEVIGGA, RIMFNLPLPIGGIITGVVSLLLL, VITALLLVIAIGFTASFFVV, VLLAAAIMGATVMPHAVYLHSGL, VGLAMLIAGGVNAAMLLVAAL, TLGATIAVLFAVGLLASGLASSS, MLVRRLITLGPALAILTLGF, TLVLSQVVLSFGIPFAVLPLVKL, and HRATTWVGWVVAVMVSLLNVMLI.

The protein in the C-terminal section; belongs to the NRAMP family.

The protein resides in the cell membrane. In terms of biological role, h(+)-stimulated, divalent metal cation uptake system. In Mycobacterium bovis (strain ATCC BAA-935 / AF2122/97), this protein is Divalent metal cation transporter MntH (mntH).